A 248-amino-acid chain; its full sequence is 1-(5-phosphoribosyl)-5-[(5-phosphoribosylamino)methylideneamino] imidazole-4-carboxamide isomerase (248 aa).

Asp-8 (proton acceptor) is an active-site residue. Asp-129 (proton donor) is an active-site residue.

It belongs to the HisA/HisF family.

It localises to the cytoplasm. It catalyses the reaction 1-(5-phospho-beta-D-ribosyl)-5-[(5-phospho-beta-D-ribosylamino)methylideneamino]imidazole-4-carboxamide = 5-[(5-phospho-1-deoxy-D-ribulos-1-ylimino)methylamino]-1-(5-phospho-beta-D-ribosyl)imidazole-4-carboxamide. It participates in amino-acid biosynthesis; L-histidine biosynthesis; L-histidine from 5-phospho-alpha-D-ribose 1-diphosphate: step 4/9. In Desulfitobacterium hafniense (strain Y51), this protein is 1-(5-phosphoribosyl)-5-[(5-phosphoribosylamino)methylideneamino] imidazole-4-carboxamide isomerase.